The sequence spans 198 residues: Carnitine operon protein CaiE (198 aa).

The segment at 174–198 is disordered; sequence KPLTQAEENRPRLKGTTDVKPKSAQ. Residues 180–198 show a composition bias toward basic and acidic residues; it reads EENRPRLKGTTDVKPKSAQ.

The protein belongs to the transferase hexapeptide repeat family.

Its pathway is amine and polyamine metabolism; carnitine metabolism. Its function is as follows. Overproduction of CaiE stimulates the activity of CaiB and CaiD. The protein is Carnitine operon protein CaiE of Salmonella typhimurium (strain LT2 / SGSC1412 / ATCC 700720).